A 160-amino-acid polypeptide reads, in one-letter code: Bcl-2-like gene 16 protein (160 aa).

Positions 64–84 match the BH1 motif; the sequence is LLTTEHTTNWGKVVAMLSFSA.

This sequence belongs to the Bcl-2 family.

This chain is Bcl-2-like gene 16 protein (16), found in Saimiri sciureus (Common squirrel monkey).